Consider the following 331-residue polypeptide: Major outer membrane protein P.IB (331 aa).

The N-terminal stretch at 1 to 19 (MKKSLIALTLAALPVAAMA) is a signal peptide.

It belongs to the Gram-negative porin family. Homotrimer.

The protein localises to the cell outer membrane. Functionally, serves as a slightly cation selective porin. This Neisseria meningitidis serogroup B (strain ATCC BAA-335 / MC58) protein is Major outer membrane protein P.IB (porB).